Consider the following 116-residue polypeptide: NADPH-dependent 7-cyano-7-deazaguanine reductase (116 aa).

The Thioimide intermediate role is filled by C31. D38 functions as the Proton donor in the catalytic mechanism. Substrate is bound by residues 53-55 (VEL) and 72-73 (YE).

This sequence belongs to the GTP cyclohydrolase I family. QueF type 1 subfamily.

The protein resides in the cytoplasm. It carries out the reaction 7-aminomethyl-7-carbaguanine + 2 NADP(+) = 7-cyano-7-deazaguanine + 2 NADPH + 3 H(+). It functions in the pathway tRNA modification; tRNA-queuosine biosynthesis. Catalyzes the NADPH-dependent reduction of 7-cyano-7-deazaguanine (preQ0) to 7-aminomethyl-7-deazaguanine (preQ1). This chain is NADPH-dependent 7-cyano-7-deazaguanine reductase, found in Chlorobium phaeovibrioides (strain DSM 265 / 1930) (Prosthecochloris vibrioformis (strain DSM 265)).